The sequence spans 614 residues: Zinc metalloproteinase-disintegrin-like protein F1 (614 aa).

Residues 1–20 form the signal peptide; sequence MLQVLLVTICLAVFPYQGSS. A propeptide spanning residues 21–192 is cleaved from the precursor; it reads IILESGNVND…IKASQFILTP (172 aa). The short motif at 167-173 is the Cys-switch; controls maturation element; sequence PKKCGVT. Position 193 is a pyrrolidone carboxylic acid (Glu) (Glu193). Residues 202 to 398 form the Peptidase M12B domain; the sequence is KYIKLAIVVD…HTPRCILNEP (197 aa). N-linked (GlcNAc...) asparagine glycosylation is present at Asn221. 3 cysteine pairs are disulfide-bonded: Cys313–Cys393, Cys353–Cys377, and Cys355–Cys360. Residue His338 coordinates Zn(2+). Residues 338-349 carry the Metal-binding motif; sequence HELGHNLGINHD. The active-site Proton acceptor is the Glu339. Zn(2+)-binding residues include His342 and His348. Residues 406-492 form the Disintegrin domain; sequence PAVCGNYVVE…ECPMDHIQKN (87 aa). Val408, Asn411, Glu415, Glu418, and Asp421 together coordinate Ca(2+). 14 cysteine pairs are disulfide-bonded: Cys409–Cys438, Cys420–Cys433, Cys422–Cys428, Cys432–Cys455, Cys446–Cys452, Cys451–Cys477, Cys464–Cys484, Cys471–Cys503, Cys496–Cys508, Cys515–Cys565, Cys530–Cys575, Cys543–Cys553, Cys560–Cys601, and Cys595–Cys607. Positions 470 to 472 match the D/ECD-tripeptide motif; it reads ECD. 3 residues coordinate Ca(2+): Asp472, Glu475, and Asp487. The N-linked (GlcNAc...) asparagine glycan is linked to Asn534.

It belongs to the venom metalloproteinase (M12B) family. P-III subfamily. P-IIIa sub-subfamily. Monomer. The cofactor is Zn(2+). In terms of processing, N-glycosylated. The N-terminus is blocked. Expressed by the venom gland (at protein level). Expressed by the venom gland.

It localises to the secreted. The alpha-fibrinogenase activity is inhibited by EDTA, but not by pefabloc. In terms of biological role, zinc metalloprotease that has fibrinogenolytic activity. Does not have hemorrhagic activity in rats. Cleaves insulin B chain at '38-Ala-|-Leu-39' and '40-Tyr-|-Leu-41' bonds. Hydrolyzes only partially and weakly isolated extracellular matrix (ECM) bovine fibronectin and basal membrane (BM) protein human collagen IV in vitro. Murine laminin is not hydrolyzed, neither isolated nor in a solubilized BM preparation. Nidogen is hydrolyzed at '350-Ser-|-Phe-351' bond in a solubilized BM preparation. Hydrolyzes plasma proteins involved in blood coagulation in vitro. Has alpha-fibrinogenase activity cleaving human fibrinogen alpha chain at '432-Lys-|-Leu-433' bond, but does not cleave beta or gamma chains. Does not cleave fibrin. Hydrolyzes only partially bovine prothrombin at '200-Ser-|-Gly-201' bond, factor X (FX) heavy chain, and very slowly, FX light chain and plasminogen in vitro, without activating any of them. Has no effect in plasma thrombin generation. Does not inhibit platelet aggregation induced by collagen in vitro. May have a delayed pathological action as an anticoagulant in envenomed patients after they received serotherapy as it is not recognized by the venom antiserum. This is Zinc metalloproteinase-disintegrin-like protein F1 from Vipera ammodytes ammodytes (Western sand viper).